Consider the following 285-residue polypeptide: Probable endonuclease 4 (285 aa).

Zn(2+)-binding residues include histidine 69, histidine 109, glutamate 145, aspartate 179, histidine 182, histidine 216, aspartate 229, histidine 231, and glutamate 261.

This sequence belongs to the AP endonuclease 2 family. Zn(2+) serves as cofactor.

The enzyme catalyses Endonucleolytic cleavage to 5'-phosphooligonucleotide end-products.. Its function is as follows. Endonuclease IV plays a role in DNA repair. It cleaves phosphodiester bonds at apurinic or apyrimidinic (AP) sites, generating a 3'-hydroxyl group and a 5'-terminal sugar phosphate. The chain is Probable endonuclease 4 from Yersinia pseudotuberculosis serotype O:1b (strain IP 31758).